The chain runs to 308 residues: Cytochrome b (308 aa).

The next 4 membrane-spanning stretches (helical) occupy residues 1–21 (FGSLLGICLLTQIITGLLLAT), 45–66 (WLIRNLQANGASFFFICIYLHI), 81–101 (WNTGVILLLTLMATAFVGYVL), and 146–166 (FFALHFLLPFLIAGLTLIHFT). Residue H65 participates in heme b binding. Positions 150 and 164 each coordinate heme b. H169 is a binding site for a ubiquinone. 3 consecutive transmembrane segments (helical) span residues 194–214 (VKDILGFMFMLLPLTTLALFS), 256–276 (LGGVLALAASVLVLFLAPFLH), and 288–308 (LSQFLFWMLVANLLILTWVGS).

The protein belongs to the cytochrome b family. As to quaternary structure, the cytochrome bc1 complex contains 11 subunits: 3 respiratory subunits (MT-CYB, CYC1 and UQCRFS1), 2 core proteins (UQCRC1 and UQCRC2) and 6 low-molecular weight proteins (UQCRH/QCR6, UQCRB/QCR7, UQCRQ/QCR8, UQCR10/QCR9, UQCR11/QCR10 and a cleavage product of UQCRFS1). This cytochrome bc1 complex then forms a dimer. Heme b is required as a cofactor.

It localises to the mitochondrion inner membrane. Its function is as follows. Component of the ubiquinol-cytochrome c reductase complex (complex III or cytochrome b-c1 complex) that is part of the mitochondrial respiratory chain. The b-c1 complex mediates electron transfer from ubiquinol to cytochrome c. Contributes to the generation of a proton gradient across the mitochondrial membrane that is then used for ATP synthesis. This chain is Cytochrome b (MT-CYB), found in Colaptes rupicola (Southern Andean flicker).